Consider the following 430-residue polypeptide: Tektin-2 (430 aa).

Coiled-coil stretches lie at residues 75–162 (KEML…FQHL) and 226–380 (KNRA…IACK).

The protein belongs to the tektin family. In terms of assembly, microtubule inner protein component of sperm flagellar doublet microtubules. May interact with CCDC172. Post-translationally, tyrosine phosphorylated. In terms of processing, ubiquitinated, leading to its degradation. Deubiquitinated by USP16, promoting its stability.

Its subcellular location is the cytoplasm. It is found in the cytoskeleton. It localises to the cilium axoneme. The protein resides in the flagellum axoneme. The protein localises to the microtubule organizing center. Functionally, microtubule inner protein (MIP) part of the dynein-decorated doublet microtubules (DMTs) in cilia and flagellar axoneme. Plays a key role in the assembly or attachment of the inner dynein arm to microtubules in sperm flagella and tracheal cilia. Forms filamentous polymers in the walls of ciliary and flagellar microtubules. This chain is Tektin-2 (Tekt2), found in Rattus norvegicus (Rat).